Reading from the N-terminus, the 288-residue chain is Elongation factor Ts (288 aa).

The interval 79 to 82 is involved in Mg(2+) ion dislocation from EF-Tu; that stretch reads TDFV.

The protein belongs to the EF-Ts family.

The protein resides in the cytoplasm. Associates with the EF-Tu.GDP complex and induces the exchange of GDP to GTP. It remains bound to the aminoacyl-tRNA.EF-Tu.GTP complex up to the GTP hydrolysis stage on the ribosome. This Ehrlichia ruminantium (strain Welgevonden) protein is Elongation factor Ts.